We begin with the raw amino-acid sequence, 192 residues long: Peptide methionine sulfoxide reductase MsrA 1 (192 aa).

Cysteine 25 is an active-site residue.

Belongs to the MsrA Met sulfoxide reductase family.

The enzyme catalyses L-methionyl-[protein] + [thioredoxin]-disulfide + H2O = L-methionyl-(S)-S-oxide-[protein] + [thioredoxin]-dithiol. It carries out the reaction [thioredoxin]-disulfide + L-methionine + H2O = L-methionine (S)-S-oxide + [thioredoxin]-dithiol. In terms of biological role, has an important function as a repair enzyme for proteins that have been inactivated by oxidation. Catalyzes the reversible oxidation-reduction of methionine sulfoxide in proteins to methionine. This chain is Peptide methionine sulfoxide reductase MsrA 1, found in Rhodopirellula baltica (strain DSM 10527 / NCIMB 13988 / SH1).